A 467-amino-acid polypeptide reads, in one-letter code: F-box protein pof9 (467 aa).

The F-box domain occupies 3–49; it reads KSPFLELSYDILLEISTYLDYKDIVHLSETCKSLSYVFDDKTIWHRF. 3 RCC1 repeats span residues 77 to 131, 302 to 354, and 355 to 417; these read RGYA…LLNE, ETFT…YLTS, and DHSI…AAGG.

Interacts with skp1.

Its subcellular location is the cytoplasm. It is found in the nucleus. This is F-box protein pof9 (pof9) from Schizosaccharomyces pombe (strain 972 / ATCC 24843) (Fission yeast).